We begin with the raw amino-acid sequence, 307 residues long: Serine/threonine-protein phosphatase PP2A-1 catalytic subunit (307 aa).

Mn(2+)-binding residues include Asp54, His56, Asp82, and Asn114. His115 (proton donor) is an active-site residue. Mn(2+) contacts are provided by His164 and His238. The disordered stretch occupies residues 286–307 (FEPAPRRGAEGEVNRRTPDYFL). Residues 289–307 (APRRGAEGEVNRRTPDYFL) show a composition bias toward basic and acidic residues.

It belongs to the PPP phosphatase family. PP-2A subfamily. Requires Mn(2+) as cofactor.

It catalyses the reaction O-phospho-L-seryl-[protein] + H2O = L-seryl-[protein] + phosphate. The catalysed reaction is O-phospho-L-threonyl-[protein] + H2O = L-threonyl-[protein] + phosphate. In Acetabularia peniculus (Green alga), this protein is Serine/threonine-protein phosphatase PP2A-1 catalytic subunit.